The following is a 378-amino-acid chain: O-glycoside alpha-1,2-mannosyltransferase homolog 3 (378 aa).

The Cytoplasmic segment spans residues 1–6 (MGIPKS). The chain crosses the membrane as a helical; Signal-anchor for type II membrane protein span at residues 7-24 (SIYFCILLFCIISFYLQS). The Lumenal portion of the chain corresponds to 25 to 378 (SKDGPKELKV…AIKWLENINS (354 aa)). The active-site Nucleophile is the Glu-276.

This sequence belongs to the glycosyltransferase 15 family.

The protein localises to the endoplasmic reticulum membrane. The protein resides in the golgi apparatus membrane. Probable mannosyltransferase involved in O-glycosylation of cell wall and secreted proteins. This is O-glycoside alpha-1,2-mannosyltransferase homolog 3 (omh3) from Schizosaccharomyces pombe (strain 972 / ATCC 24843) (Fission yeast).